The sequence spans 187 residues: Pterin-4-alpha-carbinolamine dehydratase 2, mitochondrial (187 aa).

A mitochondrion-targeting transit peptide spans 1–33 (MSRLLLPKLFSISRTQVPAASLFNNLYRRHKRF).

Belongs to the pterin-4-alpha-carbinolamine dehydratase family.

Its subcellular location is the mitochondrion. It catalyses the reaction (4aS,6R)-4a-hydroxy-L-erythro-5,6,7,8-tetrahydrobiopterin = (6R)-L-erythro-6,7-dihydrobiopterin + H2O. Its function is as follows. Involved in tetrahydrobiopterin biosynthesis. Possesses pterin-4-alpha-carbinolamine dehydratase activity when expressed in a bacterial heterolgous system. This Arabidopsis thaliana (Mouse-ear cress) protein is Pterin-4-alpha-carbinolamine dehydratase 2, mitochondrial.